Here is a 344-residue protein sequence, read N- to C-terminus: Tetraacyldisaccharide 4'-kinase (344 aa).

An ATP-binding site is contributed by histidine 65–threonine 72.

The protein belongs to the LpxK family.

The catalysed reaction is a lipid A disaccharide + ATP = a lipid IVA + ADP + H(+). It functions in the pathway glycolipid biosynthesis; lipid IV(A) biosynthesis; lipid IV(A) from (3R)-3-hydroxytetradecanoyl-[acyl-carrier-protein] and UDP-N-acetyl-alpha-D-glucosamine: step 6/6. Its function is as follows. Transfers the gamma-phosphate of ATP to the 4'-position of a tetraacyldisaccharide 1-phosphate intermediate (termed DS-1-P) to form tetraacyldisaccharide 1,4'-bis-phosphate (lipid IVA). The sequence is that of Tetraacyldisaccharide 4'-kinase from Neisseria meningitidis serogroup B (strain ATCC BAA-335 / MC58).